A 399-amino-acid polypeptide reads, in one-letter code: Bone morphogenetic protein 8A (399 aa).

An N-terminal signal peptide occupies residues 1 to 19 (MAMRPGPLWLLGLALCALG). A propeptide spanning residues 20-260 (GGHGPRPPHT…ASQSPVRAPR (241 aa)) is cleaved from the precursor. The N-linked (GlcNAc...) asparagine glycan is linked to N155. Residues 257–286 (RAPRAARPLKRRQPKKTNELPHPNKLPGIF) form a disordered region. Intrachain disulfides connect C298–C364, C327–C396, and C331–C398. Residue N340 is glycosylated (N-linked (GlcNAc...) asparagine).

It belongs to the TGF-beta family. Homodimer; disulfide-linked. Expressed in testis. expressed in trophoblast cells of the labyrinthine region of the placenta and in the inner root sheath of hair follicles of early postnatal skin. Expressed predominantly in the neonatal mouse spermatogonia.

The protein localises to the secreted. In terms of biological role, growth factor of the TGF-beta superfamily that plays important role in various biological processes, including spermatogenesis, osteogenesis, steroidogenesis as well as regulation of energy balance. Initiates the canonical BMP signaling cascade by associating with type I receptor BMPR1A and type II receptor BMPR2. Once all three components are bound together in a complex at the cell surface, BMPR2 phosphorylates and activates BMPR1A. In turn, BMPR1A propagates signal by phosphorylating SMAD1/5/8 that travel to the nucleus and act as activators and repressors of transcription of target genes. In addition, activates the SMAD2/3 pathway. In Mus musculus (Mouse), this protein is Bone morphogenetic protein 8A (Bmp8a).